The primary structure comprises 250 residues: Cellulose biosynthesis protein BcsQ (250 aa).

9–16 (VRGGVGTT) provides a ligand contact to ATP.

This sequence belongs to the BcsQ family.

The protein resides in the cytoplasm. Essential for cellulose biosynthesis. May play a role in subcellular localization of an active cellulose biosynthesis apparatus at the bacterial cell pole. The chain is Cellulose biosynthesis protein BcsQ (bcsQ) from Salmonella typhi.